A 117-amino-acid polypeptide reads, in one-letter code: Large ribosomal subunit protein bL19 (117 aa).

It belongs to the bacterial ribosomal protein bL19 family.

Functionally, this protein is located at the 30S-50S ribosomal subunit interface and may play a role in the structure and function of the aminoacyl-tRNA binding site. The chain is Large ribosomal subunit protein bL19 from Shewanella halifaxensis (strain HAW-EB4).